The following is a 423-amino-acid chain: Probable electron transfer flavoprotein-quinone oxidoreductase YgcN (423 aa).

7-21 (IIIIGAGIAGTACAL) lines the FAD pocket.

It belongs to the ETF-QO/FixC family. FAD serves as cofactor.

In terms of biological role, probably accepts electrons from YgcQ/YgcR and reduces a quinone. The chain is Probable electron transfer flavoprotein-quinone oxidoreductase YgcN (ygcN) from Escherichia coli (strain K12).